The chain runs to 386 residues: Succinate--CoA ligase [ADP-forming] subunit beta (386 aa).

One can recognise an ATP-grasp domain in the interval 9 to 244 (KQVLRSSNLN…DSQIDAKEAA (236 aa)). ATP-binding positions include K46, 53–55 (GRG), E99, L102, and E107. Residues N199 and D213 each contribute to the Mg(2+) site. Residues N264 and 321–323 (GIV) each bind substrate.

It belongs to the succinate/malate CoA ligase beta subunit family. In terms of assembly, heterotetramer of two alpha and two beta subunits. Mg(2+) serves as cofactor.

The enzyme catalyses succinate + ATP + CoA = succinyl-CoA + ADP + phosphate. It carries out the reaction GTP + succinate + CoA = succinyl-CoA + GDP + phosphate. The protein operates within carbohydrate metabolism; tricarboxylic acid cycle; succinate from succinyl-CoA (ligase route): step 1/1. Its function is as follows. Succinyl-CoA synthetase functions in the citric acid cycle (TCA), coupling the hydrolysis of succinyl-CoA to the synthesis of either ATP or GTP and thus represents the only step of substrate-level phosphorylation in the TCA. The beta subunit provides nucleotide specificity of the enzyme and binds the substrate succinate, while the binding sites for coenzyme A and phosphate are found in the alpha subunit. In Thiobacillus denitrificans (strain ATCC 25259 / T1), this protein is Succinate--CoA ligase [ADP-forming] subunit beta.